The sequence spans 295 residues: Ribosomal RNA small subunit methyltransferase A (295 aa).

S-adenosyl-L-methionine contacts are provided by Asn28, Leu30, Gly55, Glu76, Asp101, and Asn131.

Belongs to the class I-like SAM-binding methyltransferase superfamily. rRNA adenine N(6)-methyltransferase family. RsmA subfamily.

The protein localises to the cytoplasm. The catalysed reaction is adenosine(1518)/adenosine(1519) in 16S rRNA + 4 S-adenosyl-L-methionine = N(6)-dimethyladenosine(1518)/N(6)-dimethyladenosine(1519) in 16S rRNA + 4 S-adenosyl-L-homocysteine + 4 H(+). Specifically dimethylates two adjacent adenosines (A1518 and A1519) in the loop of a conserved hairpin near the 3'-end of 16S rRNA in the 30S particle. May play a critical role in biogenesis of 30S subunits. In Pelotomaculum thermopropionicum (strain DSM 13744 / JCM 10971 / SI), this protein is Ribosomal RNA small subunit methyltransferase A.